We begin with the raw amino-acid sequence, 335 residues long: tRNA (guanine(6)-N2)-methyltransferase (335 aa).

The 104-residue stretch at 47–150 folds into the THUMP domain; the sequence is EALGLRLAHH…GEEAFLGVQL (104 aa). S-adenosyl-L-methionine contacts are provided by residues 195-197, 243-244, and Asn-260; these read SGT and DA.

The protein belongs to the methyltransferase superfamily. Monomer in solution.

It is found in the cytoplasm. It catalyses the reaction guanosine(6) in tRNA + S-adenosyl-L-methionine = N(2)-methylguanosine(6) in tRNA + S-adenosyl-L-homocysteine + H(+). In terms of biological role, S-adenosyl-L-methionine-dependent methyltransferase that catalyzes the methylation of the guanosine nucleotide at position 6 (m2G6) in tRNA(Phe). The sequence is that of tRNA (guanine(6)-N2)-methyltransferase from Thermus thermophilus (strain ATCC BAA-163 / DSM 7039 / HB27).